The following is a 399-amino-acid chain: Elongation factor Tu (399 aa).

In terms of domain architecture, tr-type G spans 10-204; the sequence is KPHVNIGTIG…AVDANIPEPE (195 aa). A G1 region spans residues 19–26; the sequence is GHVDHGKT. GTP is bound at residue 19 to 26; it reads GHVDHGKT. Threonine 26 is a Mg(2+) binding site. Residues 60 to 64 are G2; the sequence is GITIN. The G3 stretch occupies residues 81-84; the sequence is DCPG. Residues 81–85 and 136–139 each bind GTP; these read DCPGH and NKCD. A G4 region spans residues 136 to 139; sequence NKCD. Positions 174–176 are G5; sequence SGL.

The protein belongs to the TRAFAC class translation factor GTPase superfamily. Classic translation factor GTPase family. EF-Tu/EF-1A subfamily. In terms of assembly, monomer.

The protein localises to the cytoplasm. The enzyme catalyses GTP + H2O = GDP + phosphate + H(+). GTP hydrolase that promotes the GTP-dependent binding of aminoacyl-tRNA to the A-site of ribosomes during protein biosynthesis. The chain is Elongation factor Tu from Synechococcus sp. (strain WH7803).